The chain runs to 681 residues: Mitosis inhibitor nif1 (681 aa).

The tract at residues 22-43 is disordered; the sequence is LNKKDGNDDDKAEHSKRSGYHG. A compositionally biased stretch (basic and acidic residues) spans 23–37; it reads NKKDGNDDDKAEHSK. Residue S70 is modified to Phosphoserine. Disordered stretches follow at residues 80 to 104 and 182 to 324; these read TTSGSSSDLLNIESPASPAEASSPF and YYHE…SSRQ. The span at 92 to 103 shows a compositional bias: low complexity; sequence ESPASPAEASSP. A compositionally biased stretch (polar residues) spans 191–203; the sequence is TASNTSPTPNSIK. A Phosphoserine modification is found at S196. Low complexity predominate over residues 238–278; sequence SSGDSTPLSGSSSSKGMLMSMSTSENHSLSSNPELSNSNLL. Over residues 296-306 the composition is skewed to basic and acidic residues; the sequence is SSKEPDKEHST. 2 Sel1-like repeats span residues 547-582 and 583-618; these read ALILYELGVCFMHGWGITRDRYLALHLIKLSGAWGD and ADAQFEAGLQMSLGAVSDKDSHMAAYYYRLAGFQGI.

It localises to the cytoplasm. Functions as a negative regulator of mitosis. It interacts with the C-terminal of nim1, thereby inhibiting its kinase activity which phosphorylates wee1. The chain is Mitosis inhibitor nif1 (nif1) from Schizosaccharomyces pombe (strain 972 / ATCC 24843) (Fission yeast).